The chain runs to 496 residues: Matrilin-1 (496 aa).

Positions 1–22 (MRVLSGTSLMLCSLLLLLQALC) are cleaved as a signal peptide. The region spanning 23 to 222 (SPGLAPQSRG…SRKFQEAFCV (200 aa)) is the VWFA 1 domain. N-linked (GlcNAc...) asparagine glycosylation is present at asparagine 76. The region spanning 223–263 (VSDLCATGDHDCEQVCISSPGSYTCACHEGFTLNSDGKTCN) is the EGF-like domain. 3 disulfides stabilise this stretch: cysteine 227–cysteine 238, cysteine 234–cysteine 247, and cysteine 249–cysteine 262. The region spanning 264–453 (VCSGGGGSSA…GKKLQKKICV (190 aa)) is the VWFA 2 domain. An N-linked (GalNAc...) asparagine glycan is attached at asparagine 344. A coiled-coil region spans residues 467–495 (QAKVEGLLQALTRKLEAVSKRLAILENTV).

Homotrimer. Part of a complex composed of MATN1 (via VWFA1 domain), type 2 collagens and type 6 collagens. Forms a complex (via covalent bonds) with ACAN; the interaction increases in abundance with increasing age of the organism via an increase in occupancy of MATN1 binding sites. Interacts with COMP. N-glycosylated; reduces binding affinity for type 2 collagens.

The protein localises to the secreted. It localises to the extracellular space. It is found in the extracellular matrix. Its function is as follows. A major component of the extracellular matrix of non-articular cartilage. Binds to type 2 collagens and forms long concatenated protein networks as part of the extracellular matrix. Required for the network-like organization and bundling of collagen fibrils surrounding chondrocytes in the zones of maturation and hypertrophy. Required for mechanotransduction and adaption to mechanical loading in cartilage chondrocytes, resulting in an increase in expression of the extracellular matrix components ACAN and COL2A1. Acts as a moderator of angiogenesis in response to injury. In Homo sapiens (Human), this protein is Matrilin-1.